The sequence spans 338 residues: Glycerol-3-phosphate dehydrogenase [NAD(P)+] (338 aa).

NADPH is bound by residues Ser-13, Trp-14, and Lys-108. Sn-glycerol 3-phosphate contacts are provided by Lys-108, Gly-139, and Ser-141. Ala-143 is an NADPH binding site. Sn-glycerol 3-phosphate contacts are provided by Lys-194, Asp-247, Ser-257, Arg-258, and Asn-259. The Proton acceptor role is filled by Lys-194. Arg-258 is an NADPH binding site. NADPH contacts are provided by Val-282 and Glu-284.

It localises to the cytoplasm. It carries out the reaction sn-glycerol 3-phosphate + NAD(+) = dihydroxyacetone phosphate + NADH + H(+). It catalyses the reaction sn-glycerol 3-phosphate + NADP(+) = dihydroxyacetone phosphate + NADPH + H(+). It participates in membrane lipid metabolism; glycerophospholipid metabolism. In terms of biological role, catalyzes the reduction of the glycolytic intermediate dihydroxyacetone phosphate (DHAP) to sn-glycerol 3-phosphate (G3P), the key precursor for phospholipid synthesis. The protein is Glycerol-3-phosphate dehydrogenase [NAD(P)+] of Streptococcus pyogenes serotype M6 (strain ATCC BAA-946 / MGAS10394).